Reading from the N-terminus, the 371-residue chain is Protein STRICTOSIDINE SYNTHASE-LIKE 7 (371 aa).

The N-terminal stretch at 1-25 is a signal peptide; it reads MPVLFSSRSLILSIIVPLLISIALY. Asn101, Asn137, and Asn285 each carry an N-linked (GlcNAc...) asparagine glycan. Position 303 is a phosphotyrosine (Tyr303).

Belongs to the strictosidine synthase family.

Its subcellular location is the vacuole. This chain is Protein STRICTOSIDINE SYNTHASE-LIKE 7, found in Arabidopsis thaliana (Mouse-ear cress).